Reading from the N-terminus, the 319-residue chain is Probable ABC transporter permease protein MG189 homolog (319 aa).

The next 6 helical transmembrane spans lie at 41-61 (VVLC…LVVA), 98-118 (AIWI…FFTV), 134-154 (LFWF…LIGQ), 169-189 (PAII…GFMF), 229-249 (TVSI…LLLL), and 282-302 (NLKM…YFLF). The ABC transmembrane type-1 domain maps to 99–302 (IWINSLVTIL…LPMFIVYFLF (204 aa)).

Belongs to the binding-protein-dependent transport system permease family. MalFG subfamily.

It is found in the cell membrane. In terms of biological role, probably part of a binding-protein-dependent transport system. Probably responsible for the translocation of the substrate across the membrane. This is Probable ABC transporter permease protein MG189 homolog from Mycoplasma pneumoniae (strain ATCC 29342 / M129 / Subtype 1) (Mycoplasmoides pneumoniae).